Reading from the N-terminus, the 198-residue chain is Charged multivesicular body protein 1a (198 aa).

Coiled-coil stretches lie at residues 7–41 and 176–198; these read QLKF…QQKN and GETS…ALRN. A disordered region spans residues 171–198; sequence GASALGETSARAQEKEDQLSRRLAALRN. The MIT-interacting motif motif lies at 187–197; the sequence is DQLSRRLAALR.

Belongs to the SNF7 family. In terms of assembly, probable peripherally associated component of the endosomal sorting required for transport complex III (ESCRT-III).

It is found in the cytoplasm. It localises to the endosome membrane. Its function is as follows. Probable peripherally associated component of the endosomal sorting required for transport complex III (ESCRT-III) which is involved in multivesicular bodies (MVBs) formation and sorting of endosomal cargo proteins into MVBs. MVBs contain intraluminal vesicles (ILVs) that are generated by invagination and scission from the limiting membrane of the endosome and mostly are delivered to lysosomes enabling degradation of membrane proteins, such as stimulated growth factor receptors, lysosomal enzymes and lipids. The chain is Charged multivesicular body protein 1a (chmp1a) from Danio rerio (Zebrafish).